The primary structure comprises 382 residues: Mannitol-1-phosphate 5-dehydrogenase (382 aa).

3-14 (ALHFGAGNIGRG) provides a ligand contact to NAD(+). At Lys-269 the chain carries N6-acetyllysine.

The protein belongs to the mannitol dehydrogenase family.

The catalysed reaction is D-mannitol 1-phosphate + NAD(+) = beta-D-fructose 6-phosphate + NADH + H(+). This chain is Mannitol-1-phosphate 5-dehydrogenase, found in Escherichia coli O7:K1 (strain IAI39 / ExPEC).